A 318-amino-acid chain; its full sequence is Replication factor C small subunit (318 aa).

43–50 contacts ATP; the sequence is GPAGTGKT.

This sequence belongs to the activator 1 small subunits family. RfcS subfamily. In terms of assembly, heteromultimer composed of small subunits (RfcS) and large subunits (RfcL).

Part of the RFC clamp loader complex which loads the PCNA sliding clamp onto DNA. This is Replication factor C small subunit from Picrophilus torridus (strain ATCC 700027 / DSM 9790 / JCM 10055 / NBRC 100828 / KAW 2/3).